We begin with the raw amino-acid sequence, 107 residues long: Protein RnfH (107 aa).

The tract at residues A82 to R107 is disordered.

The protein belongs to the UPF0125 (RnfH) family.

This chain is Protein RnfH, found in Pseudoalteromonas translucida (strain TAC 125).